A 628-amino-acid polypeptide reads, in one-letter code: tRNA 5-methylaminomethyl-2-thiouridine biosynthesis bifunctional protein MnmC (628 aa).

The tract at residues 1 to 237 (MSSYSPLVPP…KWHMTVGVRE (237 aa)) is tRNA (mnm(5)s(2)U34)-methyltransferase. The segment at 265–628 (VGGGLAGAGI…ADLLAAVAPR (364 aa)) is FAD-dependent cmnm(5)s(2)U34 oxidoreductase.

The protein in the N-terminal section; belongs to the methyltransferase superfamily. tRNA (mnm(5)s(2)U34)-methyltransferase family. This sequence in the C-terminal section; belongs to the DAO family. FAD is required as a cofactor.

Its subcellular location is the cytoplasm. It carries out the reaction 5-aminomethyl-2-thiouridine(34) in tRNA + S-adenosyl-L-methionine = 5-methylaminomethyl-2-thiouridine(34) in tRNA + S-adenosyl-L-homocysteine + H(+). Its function is as follows. Catalyzes the last two steps in the biosynthesis of 5-methylaminomethyl-2-thiouridine (mnm(5)s(2)U) at the wobble position (U34) in tRNA. Catalyzes the FAD-dependent demodification of cmnm(5)s(2)U34 to nm(5)s(2)U34, followed by the transfer of a methyl group from S-adenosyl-L-methionine to nm(5)s(2)U34, to form mnm(5)s(2)U34. The sequence is that of tRNA 5-methylaminomethyl-2-thiouridine biosynthesis bifunctional protein MnmC from Bordetella petrii (strain ATCC BAA-461 / DSM 12804 / CCUG 43448).